The sequence spans 580 residues: 2-succinyl-5-enolpyruvyl-6-hydroxy-3-cyclohexene-1-carboxylate synthase (580 aa).

This sequence belongs to the TPP enzyme family. MenD subfamily. Homodimer. Mg(2+) serves as cofactor. Mn(2+) is required as a cofactor. The cofactor is thiamine diphosphate.

It carries out the reaction isochorismate + 2-oxoglutarate + H(+) = 5-enolpyruvoyl-6-hydroxy-2-succinyl-cyclohex-3-ene-1-carboxylate + CO2. It functions in the pathway quinol/quinone metabolism; 1,4-dihydroxy-2-naphthoate biosynthesis; 1,4-dihydroxy-2-naphthoate from chorismate: step 2/7. It participates in quinol/quinone metabolism; menaquinone biosynthesis. Its function is as follows. Catalyzes the thiamine diphosphate-dependent decarboxylation of 2-oxoglutarate and the subsequent addition of the resulting succinic semialdehyde-thiamine pyrophosphate anion to isochorismate to yield 2-succinyl-5-enolpyruvyl-6-hydroxy-3-cyclohexene-1-carboxylate (SEPHCHC). The sequence is that of 2-succinyl-5-enolpyruvyl-6-hydroxy-3-cyclohexene-1-carboxylate synthase from Listeria monocytogenes serovar 1/2a (strain ATCC BAA-679 / EGD-e).